Reading from the N-terminus, the 103-residue chain is Integration host factor subunit beta (103 aa).

It belongs to the bacterial histone-like protein family. As to quaternary structure, heterodimer of an alpha and a beta chain.

Functionally, this protein is one of the two subunits of integration host factor, a specific DNA-binding protein that functions in genetic recombination as well as in transcriptional and translational control. This is Integration host factor subunit beta from Sinorhizobium medicae (strain WSM419) (Ensifer medicae).